The chain runs to 153 residues: MEKLKEFRGIKEHLGVFREAVKDAERIGFAGVPGVCTPFAQLFAYAVRDKDNIFIPNTDFSKARKLEVTEYGVELGEISPGNVDVLVLLGGLSMPGIGSDIEDVKKLVEDALEEGGELMGLCYMDMFARAGWYELLDFDCVINADIDGYVLRG.

To M.jannaschii MJ1183.

This is an uncharacterized protein from Methanothermobacter thermautotrophicus (strain ATCC 29096 / DSM 1053 / JCM 10044 / NBRC 100330 / Delta H) (Methanobacterium thermoautotrophicum).